The sequence spans 108 residues: Putative DNA-directed RNA polymerase subunit 1 inactive homolog (108 aa).

This is Putative DNA-directed RNA polymerase subunit 1 inactive homolog from Acanthamoeba polyphaga (Amoeba).